Reading from the N-terminus, the 152-residue chain is Probable flagellum biosynthesis repressor protein FlbT (152 aa).

It belongs to the FlbT family.

Has a post-transcriptional repressor function in flagellum biogenesis. Associates with the 5'-UTR of fljK mRNA and promotes its degradation. The protein is Probable flagellum biosynthesis repressor protein FlbT of Brucella anthropi (strain ATCC 49188 / DSM 6882 / CCUG 24695 / JCM 21032 / LMG 3331 / NBRC 15819 / NCTC 12168 / Alc 37) (Ochrobactrum anthropi).